The chain runs to 37 residues: Small ribosomal subunit protein uS19 (37 aa).

This sequence belongs to the universal ribosomal protein uS19 family.

The protein is Small ribosomal subunit protein uS19 (RPS15) of Helix lucorum (Snail).